Consider the following 1826-residue polypeptide: Kinesin-like protein KIF13B (1826 aa).

Residues 5-353 (KVKVAVRIRP…LRYADRAKHI (349 aa)) enclose the Kinesin motor domain. ATP is bound at residue 103-110 (GQTGSGKS). Positions 364–439 (NARIIRDLRE…ESLGISLQSS (76 aa)) form a coiled coil. One can recognise an FHA domain in the interval 471 to 535 (TLIGSANSQD…LHHGDRILWG (65 aa)). The disordered stretch occupies residues 546 to 582 (KKKKKAEREDEDQDPSMKNENSSEQLDVDGDSSSEVS). A compositionally biased stretch (polar residues) spans 561-570 (SMKNENSSEQ). 3 coiled-coil regions span residues 607 to 710 (MQSI…LDKR), 752 to 772 (SLEKLDNRLLDMRDLYQEWKE), and 1096 to 1143 (LNAL…ERNA). A Phosphoserine modification is found at Ser-661. Positions 1367-1420 (EQLTGKGKLSRRSISSPNVNRLSGSRQDLIPSYSLGSNKGRWESQQDVSQTTVS) are disordered. Polar residues-rich tracts occupy residues 1378–1392 (RSISSPNVNRLSGSR) and 1409–1420 (ESQQDVSQTTVS). At Ser-1379 the chain carries Phosphoserine. Phosphoserine; by MARK2 is present on Ser-1381. 2 positions are modified to phosphoserine: Ser-1382 and Ser-1391. Ser-1410 carries the phosphoserine; by MARK2 modification. Phosphoserine occurs at positions 1432, 1438, and 1537. Thr-1545 is modified (phosphothreonine). Ser-1559 bears the Phosphoserine mark. Residues 1579 to 1607 (SDALGPGLDAAAPPGSMPTAPEAEPEAPI) show a composition bias toward low complexity. Disordered stretches follow at residues 1579 to 1650 (SDAL…RVRR) and 1662 to 1698 (MLAGDPGCSPGAEGNAPAPGAGGQALASDSEEADEVP). Residues 1608-1624 (SHPPPPTAVPAEEPPGP) show a composition bias toward pro residues. Residue Ser-1644 is modified to Phosphoserine. A compositionally biased stretch (low complexity) spans 1671 to 1688 (PGAEGNAPAPGAGGQALA). In terms of domain architecture, CAP-Gly spans 1721–1763 (GPADFQEGTWVGVELDLPSGKNDGSIGGKQYFRCNPGYGLLVR). A Phosphoserine modification is found at Ser-1797.

The protein belongs to the TRAFAC class myosin-kinesin ATPase superfamily. Kinesin family. Binds to DLG1 and DLG4. Interacts (when phosphorylated at Ser-1381 and Ser-1410) with 14-3-3. Post-translationally, phosphorylated at Ser-1381 and Ser-1410 by MARK2, promoting interaction with 14-3-3 and inhibiting microtubule-dependent accumulation and formation of axons. As to expression, ubiquitous.

It is found in the cytoplasm. The protein resides in the cytoskeleton. It localises to the cell projection. Its subcellular location is the axon. Its function is as follows. Involved in reorganization of the cortical cytoskeleton. Regulates axon formation by promoting the formation of extra axons. May be functionally important for the intracellular trafficking of MAGUKs and associated protein complexes. This chain is Kinesin-like protein KIF13B (KIF13B), found in Homo sapiens (Human).